Reading from the N-terminus, the 494-residue chain is 3-octaprenyl-4-hydroxybenzoate carboxy-lyase (494 aa).

Asparagine 172 serves as a coordination point for Mn(2+). Residues 175–177 (IYR), 189–191 (RWL), and 194–195 (RG) each bind prenylated FMN. Position 238 (glutamate 238) interacts with Mn(2+). The active-site Proton donor is the aspartate 287.

Belongs to the UbiD family. Homohexamer. Prenylated FMN serves as cofactor. Requires Mn(2+) as cofactor.

The protein resides in the cell membrane. It carries out the reaction a 4-hydroxy-3-(all-trans-polyprenyl)benzoate + H(+) = a 2-(all-trans-polyprenyl)phenol + CO2. It participates in cofactor biosynthesis; ubiquinone biosynthesis. In terms of biological role, catalyzes the decarboxylation of 3-octaprenyl-4-hydroxy benzoate to 2-octaprenylphenol, an intermediate step in ubiquinone biosynthesis. The chain is 3-octaprenyl-4-hydroxybenzoate carboxy-lyase from Citrobacter koseri (strain ATCC BAA-895 / CDC 4225-83 / SGSC4696).